The chain runs to 426 residues: Serine hydroxymethyltransferase (426 aa).

(6S)-5,6,7,8-tetrahydrofolate contacts are provided by residues leucine 118 and 122 to 124 (GHL). Lysine 227 is modified (N6-(pyridoxal phosphate)lysine).

The protein belongs to the SHMT family. In terms of assembly, homodimer. The cofactor is pyridoxal 5'-phosphate.

Its subcellular location is the cytoplasm. The enzyme catalyses (6R)-5,10-methylene-5,6,7,8-tetrahydrofolate + glycine + H2O = (6S)-5,6,7,8-tetrahydrofolate + L-serine. It functions in the pathway one-carbon metabolism; tetrahydrofolate interconversion. The protein operates within amino-acid biosynthesis; glycine biosynthesis; glycine from L-serine: step 1/1. Its function is as follows. Catalyzes the reversible interconversion of serine and glycine with tetrahydrofolate (THF) serving as the one-carbon carrier. This reaction serves as the major source of one-carbon groups required for the biosynthesis of purines, thymidylate, methionine, and other important biomolecules. Also exhibits THF-independent aldolase activity toward beta-hydroxyamino acids, producing glycine and aldehydes, via a retro-aldol mechanism. This is Serine hydroxymethyltransferase from Mycobacterium avium (strain 104).